Here is a 149-residue protein sequence, read N- to C-terminus: Transcriptional repressor NrdR (149 aa).

A zinc finger lies at 3–34; it reads CPFCSTEETKVIDSRLVSEGYQVRRRRECGNC. Residues 49-139 form the ATP-cone domain; it reads PKVIKNDGTR…VYLSFDDINQ (91 aa).

It belongs to the NrdR family. The cofactor is Zn(2+).

Its function is as follows. Negatively regulates transcription of bacterial ribonucleotide reductase nrd genes and operons by binding to NrdR-boxes. The chain is Transcriptional repressor NrdR from Pasteurella multocida (strain Pm70).